Here is a 428-residue protein sequence, read N- to C-terminus: tRNA dimethylallyltransferase (428 aa).

ATP is bound at residue 21–28 (GTTGVGKS). 23–28 (TGVGKS) lines the dimethylallyl diphosphate pocket. 2 interaction with substrate tRNA regions span residues 46–49 (DSMQ) and 170–174 (RRVQR). Residues 199 to 207 (FDTLFLWLY) are core aggregation region. The segment at 210–232 (PEPLFQRLDDRVDDMLERGALQE) is interaction with isopentenylpyrophosphate transferase. 2 interaction with substrate tRNA regions span residues 256 to 258 (QVI) and 284 to 302 (RMKT…WIKK). A Matrin-type zinc finger spans residues 373-409 (YTCNVCRNADGKNVVAIGEKYWKIHLGSRRHKSNLKR). The Zn(2+) site is built by cysteine 375, cysteine 378, histidine 397, and histidine 403.

Belongs to the IPP transferase family.

It is found in the cytoplasm. The protein resides in the mitochondrion. It localises to the nucleus. The enzyme catalyses adenosine(37) in tRNA + dimethylallyl diphosphate = N(6)-dimethylallyladenosine(37) in tRNA + diphosphate. Catalyzes the transfer of a dimethylallyl group onto the adenine at position 37 in the anticodon loop on a specific subset of tRNAs both in the cytosol and the mitochondrion, leading to the formation of N6-(dimethylallyl)adenosine (i(6)A). This modification optimizes the codon:anticodon fit in the ribosome and promotes translational fidelity. Competes with the farnesyl pyrophosphate synthase ERG20 for the common substrate dimethylallyl diphosphate (DMAPP). This chain is tRNA dimethylallyltransferase (MOD5), found in Saccharomyces cerevisiae (strain ATCC 204508 / S288c) (Baker's yeast).